Consider the following 243-residue polypeptide: Carboxy-S-adenosyl-L-methionine synthase (243 aa).

Residues tyrosine 35, 68–70, 92–93, and arginine 199 each bind S-adenosyl-L-methionine; these read GCS and DN.

Belongs to the class I-like SAM-binding methyltransferase superfamily. Cx-SAM synthase family. Homodimer.

The catalysed reaction is prephenate + S-adenosyl-L-methionine = carboxy-S-adenosyl-L-methionine + 3-phenylpyruvate + H2O. Its function is as follows. Catalyzes the conversion of S-adenosyl-L-methionine (SAM) to carboxy-S-adenosyl-L-methionine (Cx-SAM). This Helicobacter pylori (strain J99 / ATCC 700824) (Campylobacter pylori J99) protein is Carboxy-S-adenosyl-L-methionine synthase.